A 347-amino-acid chain; its full sequence is NADH-quinone oxidoreductase subunit H (347 aa).

A run of 9 helical transmembrane segments spans residues 13-33, 50-70, 82-102, 115-135, 161-181, 198-218, 263-283, 286-306, and 321-341; these read IIMI…IAYV, PNVV…KFVF, AVFL…WAVV, VGIL…IMGG, IGFV…TDIV, FLDW…ISAL, CSLT…IWIL, VPGI…FAMV, and LGWK…AFVL.

It belongs to the complex I subunit 1 family. In terms of assembly, NDH-1 is composed of 14 different subunits. Subunits NuoA, H, J, K, L, M, N constitute the membrane sector of the complex.

It is found in the cell inner membrane. It catalyses the reaction a quinone + NADH + 5 H(+)(in) = a quinol + NAD(+) + 4 H(+)(out). Functionally, NDH-1 shuttles electrons from NADH, via FMN and iron-sulfur (Fe-S) centers, to quinones in the respiratory chain. The immediate electron acceptor for the enzyme in this species is believed to be ubiquinone. Couples the redox reaction to proton translocation (for every two electrons transferred, four hydrogen ions are translocated across the cytoplasmic membrane), and thus conserves the redox energy in a proton gradient. This subunit may bind ubiquinone. This Rhizobium leguminosarum bv. trifolii (strain WSM2304) protein is NADH-quinone oxidoreductase subunit H.